A 39-amino-acid chain; its full sequence is ORF8a protein (39 aa).

Positions M1–C15 are cleaved as a signal peptide. Positions I16–H39 constitute an SARS ORF8 Ig-like domain.

The sequence is that of ORF8a protein from Homo sapiens (Human).